The following is a 209-amino-acid chain: MAKLYFYYAAMNAGKSTVLLQSSYNYRERGMQTLLFTPAIDTRFQYGTICSRIGLSEQAYAFNNSDNLYVLTQEFQLQTQKYSCVLIDEAQFLTREQVYQLTEITDQMSIPVLAYGLRTDFRGELFPGSQFLLAWADELIELKTICHCGRKAIMNMRIDENGQAVVEGEQVLIGGNESYVATCRLHYKRGEAEVTFPRNKLFNKDTNAF.

Residues 9–16 and 88–91 contribute to the ATP site; these read AAMNAGKS and DEAQ. The active-site Proton acceptor is E89. C146, C148, C183, and H186 together coordinate Zn(2+).

The protein belongs to the thymidine kinase family. Homotetramer.

It localises to the cytoplasm. The enzyme catalyses thymidine + ATP = dTMP + ADP + H(+). The chain is Thymidine kinase from Legionella pneumophila subsp. pneumophila (strain Philadelphia 1 / ATCC 33152 / DSM 7513).